Consider the following 136-residue polypeptide: uncharacterized protein (136 aa).

The protein localises to the cytoplasm. The protein resides in the nucleus. This is an uncharacterized protein from Schizosaccharomyces pombe (strain 972 / ATCC 24843) (Fission yeast).